The chain runs to 596 residues: Zinc finger E-box-binding homeobox protein zag-1 (596 aa).

The segment at 24-46 adopts a C2H2-type 1 zinc-finger fold; the sequence is FKCPECTKAFKFKHHLKEHIRIH. The C2H2-type 2; degenerate zinc finger occupies 52–72; that stretch reads FECQQCHKRFSHSGSYSSHMS. Polar residues predominate over residues 133-145; sequence LENGTSPTPTQEP. 3 disordered regions span residues 133-225, 324-369, and 395-421; these read LENG…RPLR, NNSL…EPEW, and GFVT…GSSS. Positions 165–179 are enriched in basic and acidic residues; the sequence is SEVKTEVKTEVKTED. Residues 188-200 are compositionally biased toward polar residues; the sequence is PAVSMSLSPAPEQ. Low complexity predominate over residues 201–216; sequence NGNESMNNGGSGSDGK. Positions 223–282 form a DNA-binding region, homeobox; it reads PLRSRSFLNDSQVAVLQNHFKRNPFPSKYELSAVAEQIGVNKRVVQVWFQNTRAKERRSN. A compositionally biased stretch (basic and acidic residues) spans 331 to 355; sequence QDERNNENTDEVMDHDGLKDGKETP. 2 C2H2-type zinc fingers span residues 481-503 and 509-531; these read FSCD…KYEH and YKCD…KRLH. The C2H2-type 5; degenerate zinc-finger motif lies at 537–560; that stretch reads FQCDKCLKRFSHSGSYSQHMNHRY. A disordered region spans residues 569-596; sequence QPASPSDVLNGGSVTVSPSSSNTPPPST. A compositionally biased stretch (low complexity) spans 578 to 590; sequence NGGSVTVSPSSSN.

As to expression, expressed in the six touch receptor neurons (TRNs) but not in the FLP and PVD neurons. Expressed in the M4 cholinergic motor neuron.

It localises to the nucleus. Transcription factor. Down-regulates expression of genes involved in either the synthesis or reuptake of serotonin, dopamine and GABA. Acts as a transcriptional repressor to regulate multiple, discrete, neuron-specific aspects of terminal differentiation, including cell migration, axonal development and gene expression. Promotes touch receptor neuron differentiation by repressing the expression of egl-44 and egl-46. As egl-44 and egl-46, probably acting as a heterodimer, repress expression of zag-1 in FLP neurons, together these proteins form a bistable, negative-feedback loop that regulates the choice between neuronal fates. Required for axon guidance. Involved in the proper development of the pharynx. Required for pharynx isthmus peristalsis, probably via a role in the differentiation of the M4 cholinergic motor neuron. Directly represses its own transcription by interacting with conserved E-box sequence motifs 5'-CACCTG-3' in its own promoter. May also act as a transcriptional activator of the homeodomain ceh-28. This chain is Zinc finger E-box-binding homeobox protein zag-1, found in Caenorhabditis elegans.